Consider the following 471-residue polypeptide: Ribulose bisphosphate carboxylase large chain 2 (471 aa).

Positions 116 and 166 each coordinate substrate. Lysine 168 functions as the Proton acceptor in the catalytic mechanism. Residue lysine 170 participates in substrate binding. Positions 194, 196, and 197 each coordinate Mg(2+). Residue lysine 194 is modified to N6-carboxylysine. Histidine 287 functions as the Proton acceptor in the catalytic mechanism. Arginine 288, histidine 320, and serine 372 together coordinate substrate.

The protein belongs to the RuBisCO large chain family. Type I subfamily. As to quaternary structure, heterohexadecamer of 8 large chains and 8 small chains. It depends on Mg(2+) as a cofactor.

The protein resides in the carboxysome. It carries out the reaction 2 (2R)-3-phosphoglycerate + 2 H(+) = D-ribulose 1,5-bisphosphate + CO2 + H2O. It catalyses the reaction D-ribulose 1,5-bisphosphate + O2 = 2-phosphoglycolate + (2R)-3-phosphoglycerate + 2 H(+). In terms of biological role, ruBisCO catalyzes two reactions: the carboxylation of D-ribulose 1,5-bisphosphate, the primary event in carbon dioxide fixation, as well as the oxidative fragmentation of the pentose substrate. Both reactions occur simultaneously and in competition at the same active site. In Hydrogenovibrio marinus, this protein is Ribulose bisphosphate carboxylase large chain 2.